The chain runs to 775 residues: Endothelin-converting enzyme-like 1 (775 aa).

Residues 1-61 are Cytoplasmic-facing; the sequence is MEAPYSMTAH…LPRWNRREVC (61 aa). A disordered region spans residues 30 to 52; the sequence is GTSLPPGFPRGSGRSASGSRSGL. Positions 32 to 52 are enriched in low complexity; that stretch reads SLPPGFPRGSGRSASGSRSGL. A helical; Signal-anchor for type II membrane protein transmembrane segment spans residues 62–82; that stretch reads LLSGLVFAAGLCAILAAMLAL. Residues 83–775 lie on the Lumenal side of the membrane; that stretch reads KYLGPGAAGG…MNPVHKCSVW (693 aa). The Peptidase M13 domain occupies 99 to 775; the sequence is GCPERKAFAR…MNPVHKCSVW (677 aa). Intrachain disulfides connect Cys-124–Cys-760, Cys-132–Cys-720, Cys-188–Cys-441, and Cys-649–Cys-772. Asn-255 and Asn-322 each carry an N-linked (GlcNAc...) asparagine glycan. His-612 is a binding site for Zn(2+). The active site involves Glu-613. A Zn(2+)-binding site is contributed by His-616. A glycan (N-linked (GlcNAc...) asparagine) is linked at Asn-656. Glu-672 contributes to the Zn(2+) binding site. Catalysis depends on Asp-676, which acts as the Proton donor.

The protein belongs to the peptidase M13 family. It depends on Zn(2+) as a cofactor.

It is found in the membrane. Functionally, may contribute to the degradation of peptide hormones and be involved in the inactivation of neuronal peptides. The chain is Endothelin-converting enzyme-like 1 (Ecel1) from Mus musculus (Mouse).